A 64-amino-acid polypeptide reads, in one-letter code: Translation machinery-associated protein 7 homolog (64 aa).

Residues 1 to 64 (MSGREGGKKK…QGGIKKSGKK (64 aa)) are disordered. Residues 27 to 44 (VAFKQKQKEQQKALDAAK) show a composition bias toward basic and acidic residues.

The protein belongs to the TMA7 family.

The protein is Translation machinery-associated protein 7 homolog of Anopheles funestus (African malaria mosquito).